Consider the following 300-residue polypeptide: Protoheme IX farnesyltransferase (300 aa).

The next 9 membrane-spanning stretches (helical) occupy residues 24-44 (VTQLAVFCAVIGMFLATPGMV), 48-68 (VLLGGTVGIGLLAGSAFAINC), 94-114 (LQILAFSTVLGGLGAWTLYTF), 118-138 (LTMWLTIATFVGYAVIYTLLL), 146-166 (IVIGGASGAMPPALGWAAVTG), 172-192 (AWILVLIIFVWTPPHFWVLAL), 217-237 (LHILLYTVILFAVTMMPFISG), 239-259 (SGAVYLTSAVLLGAIFLAYAW), and 278-298 (IVYLSLLFAALLVDHYARPVI).

This sequence belongs to the UbiA prenyltransferase family. Protoheme IX farnesyltransferase subfamily.

It localises to the cell inner membrane. It carries out the reaction heme b + (2E,6E)-farnesyl diphosphate + H2O = Fe(II)-heme o + diphosphate. It functions in the pathway porphyrin-containing compound metabolism; heme O biosynthesis; heme O from protoheme: step 1/1. Its function is as follows. Converts heme B (protoheme IX) to heme O by substitution of the vinyl group on carbon 2 of heme B porphyrin ring with a hydroxyethyl farnesyl side group. The sequence is that of Protoheme IX farnesyltransferase from Burkholderia thailandensis (strain ATCC 700388 / DSM 13276 / CCUG 48851 / CIP 106301 / E264).